The primary structure comprises 780 residues: uncharacterized protein (780 aa).

One can recognise a BTB domain in the interval Asn-10–Tyr-80.

This is an uncharacterized protein from Dictyostelium discoideum (Social amoeba).